The sequence spans 508 residues: NAD(P)H-quinone oxidoreductase subunit 2 B, chloroplastic (508 aa).

13 consecutive transmembrane segments (helical) span residues Leu24–Leu44, Trp59–Trp79, Ile99–Ile119, Met124–Cys144, Phe149–Tyr169, Leu184–Leu204, Pro227–Ala247, Trp295–Ile315, Met323–Asp343, Tyr354–Leu374, Ala395–Phe415, Leu418–Leu438, and Met482–Ile502.

Belongs to the complex I subunit 2 family. NDH is composed of at least 16 different subunits, 5 of which are encoded in the nucleus.

The protein localises to the plastid. It is found in the chloroplast thylakoid membrane. The catalysed reaction is a plastoquinone + NADH + (n+1) H(+)(in) = a plastoquinol + NAD(+) + n H(+)(out). It carries out the reaction a plastoquinone + NADPH + (n+1) H(+)(in) = a plastoquinol + NADP(+) + n H(+)(out). Its function is as follows. NDH shuttles electrons from NAD(P)H:plastoquinone, via FMN and iron-sulfur (Fe-S) centers, to quinones in the photosynthetic chain and possibly in a chloroplast respiratory chain. The immediate electron acceptor for the enzyme in this species is believed to be plastoquinone. Couples the redox reaction to proton translocation, and thus conserves the redox energy in a proton gradient. The protein is NAD(P)H-quinone oxidoreductase subunit 2 B, chloroplastic of Ipomoea purpurea (Common morning glory).